The primary structure comprises 142 residues: Endoribonuclease YbeY (142 aa).

Residues His-107, His-111, and Asp-117 each coordinate Zn(2+).

This sequence belongs to the endoribonuclease YbeY family. It depends on Zn(2+) as a cofactor.

The protein localises to the cytoplasm. Functionally, single strand-specific metallo-endoribonuclease involved in late-stage 70S ribosome quality control and in maturation of the 3' terminus of the 16S rRNA. The protein is Endoribonuclease YbeY of Parabacteroides distasonis (strain ATCC 8503 / DSM 20701 / CIP 104284 / JCM 5825 / NCTC 11152).